A 324-amino-acid chain; its full sequence is Glycerol-3-phosphate dehydrogenase [NAD(P)+] (324 aa).

3 residues coordinate NADPH: Phe-11, Arg-31, and Lys-107. Lys-107 and Gly-135 together coordinate sn-glycerol 3-phosphate. An NADPH-binding site is contributed by Ala-139. Lys-190, Asp-245, Ser-255, Arg-256, and Asn-257 together coordinate sn-glycerol 3-phosphate. The active-site Proton acceptor is the Lys-190. Arg-256 is a binding site for NADPH. Positions 278 and 279 each coordinate NADPH.

Belongs to the NAD-dependent glycerol-3-phosphate dehydrogenase family.

It localises to the cytoplasm. The catalysed reaction is sn-glycerol 3-phosphate + NAD(+) = dihydroxyacetone phosphate + NADH + H(+). The enzyme catalyses sn-glycerol 3-phosphate + NADP(+) = dihydroxyacetone phosphate + NADPH + H(+). It participates in membrane lipid metabolism; glycerophospholipid metabolism. In terms of biological role, catalyzes the reduction of the glycolytic intermediate dihydroxyacetone phosphate (DHAP) to sn-glycerol 3-phosphate (G3P), the key precursor for phospholipid synthesis. This is Glycerol-3-phosphate dehydrogenase [NAD(P)+] from Anaplasma phagocytophilum (strain HZ).